Consider the following 228-residue polypeptide: Homeobox-leucine zipper protein ATHB-53 (228 aa).

The interval 36 to 62 is disordered; that stretch reads DGGEESKPVKRRRKRRSKGSSATNEED. Residues 44 to 53 are compositionally biased toward basic residues; the sequence is VKRRRKRRSK. A DNA-binding region (homeobox) is located at residues 68–127; it reads GMLRKRKLTDEQVNMLEYSFGNEHKLESGRKEKIAGELGLDPRQVAVWFQNRRARWKNKK. Positions 128–156 are leucine-zipper; that stretch reads LEEEYAKLKNHHDNVVLGQCQLESQILKL.

It belongs to the HD-ZIP homeobox family. Class I subfamily. As to expression, expressed in root meristem, late flowers and siliques.

The protein localises to the nucleus. In terms of biological role, probable transcription factor that may play a regulatory role in auxin/cytokinin signaling during root development. This is Homeobox-leucine zipper protein ATHB-53 (ATHB-53) from Arabidopsis thaliana (Mouse-ear cress).